A 218-amino-acid chain; its full sequence is Putative inactive cathepsin L-like protein CTSL3P (218 aa).

Disordered stretches follow at residues 144-173 (GDWK…EVAQ) and 195-218 (GDED…EAQV). Residues 201–212 (EDKWPHDMRNHL) are compositionally biased toward basic and acidic residues.

This sequence belongs to the peptidase C1 family.

This is Putative inactive cathepsin L-like protein CTSL3P (CTSL3P) from Homo sapiens (Human).